The sequence spans 320 residues: Short-chain dehydrogenase TIC 32 A, chloroplastic (320 aa).

Residues 40–46 (GGTSGIG), 92–93 (DL), Asn-119, and Thr-140 contribute to the NADP(+) site. Residue Ser-174 coordinates substrate. Residue Tyr-196 is the Proton acceptor of the active site. The segment at 301–317 (DTTLADKLWDFSIKLVE) is interaction with calmodulin.

The protein belongs to the short-chain dehydrogenases/reductases (SDR) family. As to quaternary structure, part of the Tic complex. As to expression, expressed in the dehiscence zone of developing pods.

It is found in the plastid. Its subcellular location is the chloroplast inner membrane. Involved in protein precursor import into chloroplasts. Maybe involved in pod abscission or dehiscence (pod shatter). The chain is Short-chain dehydrogenase TIC 32 A, chloroplastic from Brassica napus (Rape).